Reading from the N-terminus, the 251-residue chain is Adenosylcobinamide-GDP ribazoletransferase (251 aa).

7 helical membrane passes run 36 to 56 (LYPF…FVLS), 60 to 80 (VPIM…TGFL), 110 to 130 (VGAF…AGMF), 141 to 161 (ILIF…VSQE), 181 to 201 (EIIL…TLGI), 202 to 222 (NYLI…LKVK), and 231 to 251 (DVAG…LGII).

It belongs to the CobS family. Requires Mg(2+) as cofactor.

It is found in the cell membrane. It carries out the reaction alpha-ribazole + adenosylcob(III)inamide-GDP = adenosylcob(III)alamin + GMP + H(+). It catalyses the reaction alpha-ribazole 5'-phosphate + adenosylcob(III)inamide-GDP = adenosylcob(III)alamin 5'-phosphate + GMP + H(+). It participates in cofactor biosynthesis; adenosylcobalamin biosynthesis; adenosylcobalamin from cob(II)yrinate a,c-diamide: step 7/7. In terms of biological role, joins adenosylcobinamide-GDP and alpha-ribazole to generate adenosylcobalamin (Ado-cobalamin). Also synthesizes adenosylcobalamin 5'-phosphate from adenosylcobinamide-GDP and alpha-ribazole 5'-phosphate. This is Adenosylcobinamide-GDP ribazoletransferase from Clostridium perfringens (strain ATCC 13124 / DSM 756 / JCM 1290 / NCIMB 6125 / NCTC 8237 / Type A).